Here is an 85-residue protein sequence, read N- to C-terminus: Oxytocin-neurophysin 1 (85 aa).

At Gly3 the chain carries Glycine amide. 6 disulfide bridges follow: Cys16/Cys60, Cys19/Cys33, Cys27/Cys50, Cys34/Cys40, Cys67/Cys79, and Cys80/Cys85.

It belongs to the vasopressin/oxytocin family. As to quaternary structure, interacts with oxytocin receptor (Ki=1.5 nM). Interacts with vasopressin V1aR/AVPR1A (Ki=37 nM), V1bR/AVPR1B (Ki=222 nM), and V2R/AVPR2 receptors (Ki=823 nM).

In terms of biological role, neurophysin 1 specifically binds oxytocin. Functionally, oxytocin causes contraction of the smooth muscle of the uterus and of the mammary gland. Acts by binding to oxytocin receptor (OXTR). The sequence is that of Oxytocin-neurophysin 1 (OXT) from Papio hamadryas (Hamadryas baboon).